A 475-amino-acid chain; its full sequence is MKWETVIGLEVHTQLATQSKIFSASSTAFGAAPNTQASAVDIALPGVLPVLNKAAVECAIKFGLAIGATLNRVNVFDRKNYFYPDLPKGYQISQLAKPIVEGGALTIVVDGVEKTIHLTRAHMEEDAGKSLHEDFHGMTGIDLNRAGTPLLEIVSEPEMRSSAEAVAYARALHTLVTWIGICDGNMQEGSFRVDANVSVRPLGQAEFGTRREIKNLNSFRFLQQAIDYEVRWQIETLEDGGRIQQATVLFDPDTGETRMMRSKEEAHDYRYFPDPDLLPVKLDEAWIDAVRTTLPELPAAMRTRFQQDYGVSAYDASVLTGSRALAAYFEAAAQQSGQPKLAANWVMGELSAALNKAELDIGESPVSAVQLGTLITRIQDGTLSGKLAKQVFEGLWEGAGDVDGIIAARGLKQMSDAGELEKIVDEVLAANQKSVEEFRAGKDKAFNALVGQVMKASRGKANPAQVNELLKAKLQ.

Belongs to the GatB/GatE family. GatB subfamily. In terms of assembly, heterotrimer of A, B and C subunits.

It carries out the reaction L-glutamyl-tRNA(Gln) + L-glutamine + ATP + H2O = L-glutaminyl-tRNA(Gln) + L-glutamate + ADP + phosphate + H(+). The enzyme catalyses L-aspartyl-tRNA(Asn) + L-glutamine + ATP + H2O = L-asparaginyl-tRNA(Asn) + L-glutamate + ADP + phosphate + 2 H(+). Its function is as follows. Allows the formation of correctly charged Asn-tRNA(Asn) or Gln-tRNA(Gln) through the transamidation of misacylated Asp-tRNA(Asn) or Glu-tRNA(Gln) in organisms which lack either or both of asparaginyl-tRNA or glutaminyl-tRNA synthetases. The reaction takes place in the presence of glutamine and ATP through an activated phospho-Asp-tRNA(Asn) or phospho-Glu-tRNA(Gln). This is Aspartyl/glutamyl-tRNA(Asn/Gln) amidotransferase subunit B from Thiobacillus denitrificans (strain ATCC 25259 / T1).